The sequence spans 235 residues: Transmembrane emp24 domain-containing protein 9 (235 aa).

The first 37 residues, 1 to 37 (MAVELGVLLVRPRPGTGLGRVMRTLLLVLWLATRGSA), serve as a signal peptide directing secretion. Over 38–202 (LYFHIGETEK…RQTSESTNQR (165 aa)) the chain is Lumenal. A GOLD domain is found at 47-145 (KKCFIEEIPD…MLRVHLDIQV (99 aa)). Positions 121–160 (CLHSNSTKFSLFAGGMLRVHLDIQVGEHANDYAEIAAKDK) are required for interaction with STX17. An N-linked (GlcNAc...) asparagine glycan is attached at asparagine 125. Residues 154–184 (EIAAKDKLSELQLRVRQLVEQVEQIQKEQNY) are a coiled coil. Residue lysine 160 is modified to N6-acetyllysine. A helical transmembrane segment spans residues 203–222 (VLWWSILQTLILVAIGVWQM). The Cytoplasmic segment spans residues 223–235 (RHLKSFFEAKKLV). Positions 228-229 (FF) match the COPII vesicle coat-binding motif. Residues 228-235 (FFEAKKLV) carry the COPI vesicle coat-binding motif.

It belongs to the EMP24/GP25L family. In terms of assembly, monomer and homodimer in endoplasmic reticulum. Predominantly monomeric and to lesser extent homodimeric in endoplasmic reticulum-Golgi intermediate compartment and cis-Golgi network. Probably oligomerizes with other members of the EMP24/GP25L family such as TMED2, TMED7 and TMED10. Interacts with TMED5. Interacts (via C-terminus) with COPG1; the interaction involves dimeric TMED9. Interacts with PTPN2 and SPAST. Interacts with STX17; the interaction is direct. Post-translationally, N-linked glycosylated containing high mannose.

Its subcellular location is the endoplasmic reticulum membrane. The protein localises to the golgi apparatus. It is found in the cis-Golgi network membrane. It localises to the endoplasmic reticulum-Golgi intermediate compartment membrane. The protein resides in the trans-Golgi network membrane. Its function is as follows. Appears to be involved in vesicular protein trafficking, mainly in the early secretory pathway. In COPI vesicle-mediated retrograde transport involved in the coatomer recruitment to membranes of the early secretory pathway. Increases coatomer-dependent activity of ARFGAP2. Thought to play a crucial role in the specific retention of p24 complexes in cis-Golgi membranes; specifically contributes to the coupled localization of TMED2 and TMED10 in the cis-Golgi network. May be involved in organization of intracellular membranes, such as of the ER-Golgi intermediate compartment and the Golgi apparatus. Involved in ER localization of PTPN2 isoform PTPB. The polypeptide is Transmembrane emp24 domain-containing protein 9 (TMED9) (Homo sapiens (Human)).